A 467-amino-acid polypeptide reads, in one-letter code: Congo red hypersensitive protein 2 (467 aa).

Residues 1-23 (MAIVNSWLICLVSIFSFVVRVEA) form the signal peptide. A glycan (N-linked (GlcNAc...) asparagine) is linked at Asn-28. Cys-56 and Cys-67 are disulfide-bonded. Residues 63–280 (SHDSCMPVPI…WSGGEINWDA (218 aa)) form the GH16 domain. Asn-96 carries an N-linked (GlcNAc...) asparagine glycan. Residue Glu-166 is the Nucleophile of the active site. The Proton donor role is filled by Glu-170. Glu-170 contributes to the chitin binding site. N-linked (GlcNAc...) asparagine glycans are attached at residues Asn-190, Asn-196, Asn-233, and Asn-237. Trp-257 lines the chitin pocket. N-linked (GlcNAc...) asparagine glycosylation occurs at Asn-261. Thr-268 serves as a coordination point for chitin. 2 N-linked (GlcNAc...) asparagine glycosylation sites follow: Asn-297 and Asn-310. Positions 337–444 (MDSDEGSGLD…SSSTSSMSGN (108 aa)) are disordered. Over residues 351–444 (ATTSSTQKSS…SSSTSSMSGN (94 aa)) the composition is skewed to low complexity. The GPI-anchor amidated asparagine moiety is linked to residue Asn-445. Positions 446–467 (AGANVAANWRLTVLCVILGYVL) are cleaved as a propeptide — removed in mature form.

It belongs to the glycosyl hydrolase 16 family. CRH1 subfamily. The GPI-anchor is attached to the protein in the endoplasmic reticulum and serves to target the protein to the cell surface. There, the glucosamine-inositol phospholipid moiety is cleaved off and the GPI-modified mannoprotein is covalently attached via its lipidless GPI glycan remnant to the 1,6-beta-glucan of the outer cell wall layer.

It is found in the secreted. Its subcellular location is the cell wall. The protein localises to the membrane. The catalysed reaction is Random endo-hydrolysis of N-acetyl-beta-D-glucosaminide (1-&gt;4)-beta-linkages in chitin and chitodextrins.. In terms of biological role, dual chitinase/transglycosylase that plays a role in cell wall architecture. Chitinase and transglycosylase activities are coupled. Required for the polysaccharide cross-linking at the septa and the cell wall. More specifically, transfers chitin to both beta(1-3)- and beta(1-6)glucan in the cell wall. The minimal number of intact hexopyranose units required in the molecule of the acceptor oligosaccharide is two and the effectivity of the acceptor increased with the increasing length of its oligosaccharide chain. In Saccharomyces cerevisiae (strain ATCC 204508 / S288c) (Baker's yeast), this protein is Congo red hypersensitive protein 2.